The chain runs to 366 residues: Aminomethyltransferase (366 aa).

Belongs to the GcvT family. The glycine cleavage system is composed of four proteins: P, T, L and H.

It catalyses the reaction N(6)-[(R)-S(8)-aminomethyldihydrolipoyl]-L-lysyl-[protein] + (6S)-5,6,7,8-tetrahydrofolate = N(6)-[(R)-dihydrolipoyl]-L-lysyl-[protein] + (6R)-5,10-methylene-5,6,7,8-tetrahydrofolate + NH4(+). Its function is as follows. The glycine cleavage system catalyzes the degradation of glycine. This is Aminomethyltransferase from Chlorobium chlorochromatii (strain CaD3).